The primary structure comprises 276 residues: 5'-nucleotidase SurE (276 aa).

4 residues coordinate a divalent metal cation: Asp-14, Asp-15, Ser-46, and Asn-104.

This sequence belongs to the SurE nucleotidase family. A divalent metal cation is required as a cofactor.

It is found in the cytoplasm. It catalyses the reaction a ribonucleoside 5'-phosphate + H2O = a ribonucleoside + phosphate. Its function is as follows. Nucleotidase that shows phosphatase activity on nucleoside 5'-monophosphates. The polypeptide is 5'-nucleotidase SurE (Crocosphaera subtropica (strain ATCC 51142 / BH68) (Cyanothece sp. (strain ATCC 51142))).